Reading from the N-terminus, the 530-residue chain is Anthranilate synthase component 1, pyocyanine specific (530 aa).

331 to 332 (GT) lines the substrate pocket. Position 364 (Glu364) interacts with Mg(2+). Substrate contacts are provided by residues Tyr452, Arg472, 486 to 488 (GAG), and Gly488. Glu501 is a Mg(2+) binding site.

The protein belongs to the anthranilate synthase component I family. As to quaternary structure, heterotetramer consisting of two non-identical subunits: a beta subunit (PhnB) and a large alpha subunit (PhnA). Requires Mg(2+) as cofactor.

The catalysed reaction is chorismate + L-glutamine = anthranilate + pyruvate + L-glutamate + H(+). It functions in the pathway secondary metabolite biosynthesis; pyocyanine biosynthesis. Its function is as follows. Part of a heterotetrameric complex that catalyzes the two-step biosynthesis of anthranilate, a precursor for Pseudomonas quinolone signal (2-heptyl-3-hydroxy-4-quinolone; PQS) production which is required to induce the genes for the biosynthesis of the virulence factor pyocyanine (PCN), a characteristic blue-green phenazine pigment produced by P.aeruginosa. In the first step, the glutamine-binding beta subunit (PhnB) of anthranilate synthase (AS) provides the glutamine amidotransferase activity which generates ammonia as a substrate that, along with chorismate, is used in the second step, catalyzed by the large alpha subunit of AS (PhnA) to produce anthranilate. In Pseudomonas aeruginosa (strain ATCC 15692 / DSM 22644 / CIP 104116 / JCM 14847 / LMG 12228 / 1C / PRS 101 / PAO1), this protein is Anthranilate synthase component 1, pyocyanine specific.